A 259-amino-acid chain; its full sequence is Phosphonates import ATP-binding protein PhnC (259 aa).

Positions 4–245 (ISIQSVTKRF…ALRTIYQREG (242 aa)) constitute an ABC transporter domain. 37–44 (GPSGAGKS) lines the ATP pocket.

It belongs to the ABC transporter superfamily. Phosphonates importer (TC 3.A.1.9.1) family. The complex is composed of two ATP-binding proteins (PhnC), two transmembrane proteins (PhnE) and a solute-binding protein (PhnD).

The protein resides in the cell inner membrane. It carries out the reaction phosphonate(out) + ATP + H2O = phosphonate(in) + ADP + phosphate + H(+). In terms of biological role, part of the ABC transporter complex PhnCDE involved in phosphonates import. Responsible for energy coupling to the transport system. The chain is Phosphonates import ATP-binding protein PhnC from Thiobacillus denitrificans (strain ATCC 25259 / T1).